A 384-amino-acid chain; its full sequence is MSKRKICIVSATRAEWYLLRNLCHEIQNDKDLSLQIIATGAHLSPEFGLTYKEIEKEFKITKKIPILLANDDKISLCKSMSLAFSAFSDAFEDLKPDMVVILGDRYEMLSVASVCLLMHIPLVHLCGGELTLGAIDDSIRHSISKMSHLHFVSHEIYKKRLLQLGEEEKRVFNIGSLASTIIKNMNFLNKKDLEKALEMKLDKELYLITYHPLTLNVKNTQKEIKTLLKKLDTLKNASLIFTKANADENGLLINEILQNYCQKNSHKAKLFDNLGSQKYLSLMKIAKAMIGNSSSGISESPFFKTPCINIGDRQKGRLRTQNIIDSEINDLDQAFEKLESKEFKQNLKNFKNPYDNGKNPNKIIKTCLKNVNLDTILHKNFIDL.

The protein belongs to the UDP-N-acetylglucosamine 2-epimerase family.

It carries out the reaction GDP-N,N'-diacetylbacillosamine + H2O = 2,4-diacetamido-2,4,6-trideoxy-alpha-D-mannopyranose + GDP + H(+). It catalyses the reaction UDP-N,N'-diacetylbacillosamine + H2O = 2,4-diacetamido-2,4,6-trideoxy-alpha-D-mannopyranose + UDP + H(+). Involved in biosynthesis of legionaminic acid (5,7-diamino-3,5,7,9-tetradeoxy-D-glycero-D-galacto-non-2-ulosonic acid)(Leg), a sialic acid-like derivative that is incorporated into flagellin via O-linkage to Ser/Thr. Catalyzes the conversion of GDP-N,N'-diacetylbacillosamine (Bac2Ac4Ac) into 2,4-diacetamido-2,4,6-trideoxymannose and GDP. It can also use UDP-N,N'-diacetylbacillosamine however it generates small quantities of 2,4-diacetamido-2,4,6-trideoxymannose. The sequence is that of GDP/UDP-N,N'-diacetylbacillosamine 2-epimerase (hydrolyzing) (legG) from Campylobacter jejuni subsp. jejuni serotype O:2 (strain ATCC 700819 / NCTC 11168).